A 307-amino-acid chain; its full sequence is Chlorophyll a-b binding protein 1, chloroplastic (307 aa).

The N-terminal 44 residues, 1-44 (MAPYSVVASVLAAAPPQQSGSVRQLPSTINRAITQRSQSRHVAS), are a transit peptide targeting the chloroplast. Residues 34–54 (TQRSQSRHVASASSASSPTTM) form a disordered region. Positions 52, 63, 64, 65, 68, 81, 86, 89, 90, 91, and 92 each coordinate chlorophyll a. Leu-96 contributes to the loroxanthin binding site. A helical membrane pass occupies residues 111–143 (NYDESRLRWLLEGELYNGRLAMLAVVGVLTVEA). Chlorophyll a is bound by residues Leu-120, Glu-124, Asn-127, Met-132, and Lys-146. Trp-149 contributes to the loroxanthin binding site. Chlorophyll a contacts are provided by Glu-151, Tyr-163, His-171, Glu-178, Arg-181, Glu-190, Arg-198, and Asp-200. The chain crosses the membrane as a helical span at residues 161-186 (TPYVVAVVGGHLAFALLEKKRLENFR). All-trans-violaxanthin contacts are provided by Asp-200 and Leu-202. Chlorophyll a contacts are provided by Leu-204, Asn-208, Tyr-214, Asn-215, Ala-218, Asn-222, and Arg-224. The chain crosses the membrane as a helical span at residues 213–238 (DYNRQAEVRNCRLAMLTFLGFSVQAW). Phe-230 is a binding site for loroxanthin. Phe-233 is a binding site for all-trans-violaxanthin. Gln-236 provides a ligand contact to chlorophyll a. Residue Pro-244 coordinates all-trans-violaxanthin. The chlorophyll a site is built by Asn-247, His-251, Pro-255, Phe-256, Ala-258, Asn-259, Ile-260, and Phe-274. A helical membrane pass occupies residues 265–289 (DRGTNVVAIFSAFAAVMHIAELARE).

It belongs to the light-harvesting chlorophyll a/b-binding (LHC) protein family. As to quaternary structure, homooligomer. Component of a light-harvesting complex (LHC) consisting of 11 chlorophyll a-b binding proteins. Binds 11 chlorophylls (Chl-a and Chl-b) and the 2 carotenoids violaxanthin and loroxanthin. serves as cofactor.

The protein localises to the plastid. It is found in the chloroplast thylakoid membrane. Its function is as follows. Component of a light-harvesting complex (LHC). The LHC functions as a light receptor, it captures and delivers excitation energy to photosystems with which it is closely associated. Functions in a far-red LHC by absorbing far-red light and promoting photosystem II (PSII) excitation, likely with entropy-driven uphill excitation energy transfer. Exhibits a typical absorption band at 671 nm (Qy band), as well as a large far-red absorption band at 706.5 together with fluorescence emission at around 713 nm (F713). This Prasiola crispa (Green alga) protein is Chlorophyll a-b binding protein 1, chloroplastic.